The sequence spans 497 residues: Beta-glucosidase 8 (497 aa).

Residues 1–22 (MKHFNLLSIILVIVLATSYIDA) form the signal peptide. An a beta-D-glucoside-binding site is contributed by glutamine 42. Asparagine 65 carries N-linked (GlcNAc...) asparagine glycosylation. A beta-D-glucoside is bound by residues histidine 139 and 184-185 (NE). The Proton donor role is filled by glutamate 185. A glycan (N-linked (GlcNAc...) asparagine) is linked at asparagine 202. Position 319 (tyrosine 319) interacts with a beta-D-glucoside. The N-linked (GlcNAc...) asparagine glycan is linked to asparagine 354. A beta-D-glucoside-binding residues include glutamate 387, tryptophan 430, and phenylalanine 446. Glutamate 387 functions as the Nucleophile in the catalytic mechanism. Asparagine 452, asparagine 474, and asparagine 490 each carry an N-linked (GlcNAc...) asparagine glycan.

It belongs to the glycosyl hydrolase 1 family.

The enzyme catalyses Hydrolysis of terminal, non-reducing beta-D-glucosyl residues with release of beta-D-glucose.. In Arabidopsis thaliana (Mouse-ear cress), this protein is Beta-glucosidase 8.